A 900-amino-acid polypeptide reads, in one-letter code: Alpha-actinin-3 (900 aa).

An N-acetylmethionine modification is found at methionine 1. Positions 1–26 (MMMVMQPEGLGAGEGPFSGGGGGEYM) are disordered. Residues 1–260 (MMMVMQPEGL…IMTYVSCFYH (260 aa)) form an actin-binding region. Gly residues predominate over residues 10-24 (LGAGEGPFSGGGGGE). 2 consecutive Calponin-homology (CH) domains span residues 44-148 (KQQR…LRFA) and 157-263 (TSAK…HAFA). Spectrin repeat units lie at residues 287-397 (KLME…WLLS), 407-512 (HLAE…ALER), 522-633 (QLQL…TLQE), and 643-746 (RLRR…EVEN). EF-hand domains are found at residues 759 to 794 (EQLNEFRASFNHFDRKRNGMMEPDDFRACLISMGYD) and 795 to 830 (LGEVEFARIMTMVDPNAAGVVTFQAFIDFMTRETAE). 6 residues coordinate Ca(2+): aspartate 772, asparagine 776, methionine 778, aspartate 783, aspartate 808, and asparagine 810.

Belongs to the alpha-actinin family. In terms of assembly, homodimer; antiparallel. Also forms heterodimers with ACTN2. Interacts with MYOZ1. In terms of tissue distribution, expression restricted to skeletal muscle fast (type 2) fibers (at protein level).

In terms of biological role, F-actin cross-linking protein which is thought to anchor actin to a variety of intracellular structures. This is a bundling protein. The chain is Alpha-actinin-3 (Actn3) from Mus musculus (Mouse).